Consider the following 199-residue polypeptide: Cytochrome c oxidase subunit 2 (199 aa).

A helical membrane pass occupies residues 1-13 (AICSLVLYLLTLM). Residues 14-26 (LMEKLSSNTVDAQ) lie on the Mitochondrial matrix side of the membrane. Residues 27–54 (EVELIWTILPAIVLILLALPSLQILYMM) traverse the membrane as a helical segment. The Mitochondrial intermembrane segment spans residues 55 to 199 (DEIDEPDLTL…SSLLSISSSL (145 aa)). Positions 128, 163, 165, 167, 171, and 174 each coordinate Cu cation. Position 165 (glutamate 165) interacts with Mg(2+).

Belongs to the cytochrome c oxidase subunit 2 family. As to quaternary structure, component of the cytochrome c oxidase (complex IV, CIV), a multisubunit enzyme composed of 14 subunits. The complex is composed of a catalytic core of 3 subunits MT-CO1, MT-CO2 and MT-CO3, encoded in the mitochondrial DNA, and 11 supernumerary subunits COX4I, COX5A, COX5B, COX6A, COX6B, COX6C, COX7A, COX7B, COX7C, COX8 and NDUFA4, which are encoded in the nuclear genome. The complex exists as a monomer or a dimer and forms supercomplexes (SCs) in the inner mitochondrial membrane with NADH-ubiquinone oxidoreductase (complex I, CI) and ubiquinol-cytochrome c oxidoreductase (cytochrome b-c1 complex, complex III, CIII), resulting in different assemblies (supercomplex SCI(1)III(2)IV(1) and megacomplex MCI(2)III(2)IV(2)). Found in a complex with TMEM177, COA6, COX18, COX20, SCO1 and SCO2. Interacts with TMEM177 in a COX20-dependent manner. Interacts with COX20. Interacts with COX16. Cu cation serves as cofactor.

The protein resides in the mitochondrion inner membrane. The enzyme catalyses 4 Fe(II)-[cytochrome c] + O2 + 8 H(+)(in) = 4 Fe(III)-[cytochrome c] + 2 H2O + 4 H(+)(out). In terms of biological role, component of the cytochrome c oxidase, the last enzyme in the mitochondrial electron transport chain which drives oxidative phosphorylation. The respiratory chain contains 3 multisubunit complexes succinate dehydrogenase (complex II, CII), ubiquinol-cytochrome c oxidoreductase (cytochrome b-c1 complex, complex III, CIII) and cytochrome c oxidase (complex IV, CIV), that cooperate to transfer electrons derived from NADH and succinate to molecular oxygen, creating an electrochemical gradient over the inner membrane that drives transmembrane transport and the ATP synthase. Cytochrome c oxidase is the component of the respiratory chain that catalyzes the reduction of oxygen to water. Electrons originating from reduced cytochrome c in the intermembrane space (IMS) are transferred via the dinuclear copper A center (CU(A)) of subunit 2 and heme A of subunit 1 to the active site in subunit 1, a binuclear center (BNC) formed by heme A3 and copper B (CU(B)). The BNC reduces molecular oxygen to 2 water molecules using 4 electrons from cytochrome c in the IMS and 4 protons from the mitochondrial matrix. This chain is Cytochrome c oxidase subunit 2 (MT-CO2), found in Casuarius bennetti (Dwarf cassowary).